Reading from the N-terminus, the 450-residue chain is NAD-specific glutamate dehydrogenase (450 aa).

Lysine 90, glutamine 111, and lysine 114 together coordinate substrate. Lysine 126 serves as the catalytic Proton donor. Residue glycine 165 coordinates substrate. Threonine 210 and asparagine 241 together coordinate NAD(+). Serine 381 lines the substrate pocket.

The protein belongs to the Glu/Leu/Phe/Val dehydrogenases family. Homohexamer.

The catalysed reaction is L-glutamate + NAD(+) + H2O = 2-oxoglutarate + NH4(+) + NADH + H(+). It participates in amino-acid degradation; L-glutamate degradation via hydroxyglutarate pathway; crotonoyl-CoA from L-glutamate: step 1/5. The polypeptide is NAD-specific glutamate dehydrogenase (gdh) (Clostridium symbiosum (Bacteroides symbiosus)).